The primary structure comprises 226 residues: Thioredoxin domain-containing protein 9 (226 aa).

The 106-residue stretch at 75-180 (EIGSERDFFQ…TTETLEWRLG (106 aa)) folds into the Thioredoxin domain. A phosphoserine mark is found at Ser188, Ser221, and Ser223.

As to quaternary structure, forms ternary complexes with the chaperonin TCP1 complex, spanning the cylindrical chaperonin cavity and contacting at least 2 subunits.

It localises to the cytoplasm. Its subcellular location is the nucleus. It is found in the cytoskeleton. The protein resides in the microtubule organizing center. The protein localises to the centrosome. It localises to the midbody. Its function is as follows. Significantly diminishes the chaperonin TCP1 complex ATPase activity, thus negatively impacts protein folding, including that of actin or tubulin. In Rattus norvegicus (Rat), this protein is Thioredoxin domain-containing protein 9 (Txndc9).